The sequence spans 342 residues: Dihydroorotate dehydrogenase (quinone) (342 aa).

FMN-binding positions include Ala-61–Lys-65 and Thr-85. Residue Lys-65 participates in substrate binding. Substrate is bound at residue Asn-110–Phe-114. FMN is bound by residues Asn-138 and Asn-171. Position 171 (Asn-171) interacts with substrate. Catalysis depends on Ser-174, which acts as the Nucleophile. Position 176 (Asn-176) interacts with substrate. Residues Lys-216 and Thr-244 each contribute to the FMN site. Asn-245–Thr-246 serves as a coordination point for substrate. Residues Gly-267, Gly-296, and Tyr-317–Ser-318 contribute to the FMN site.

It belongs to the dihydroorotate dehydrogenase family. Type 2 subfamily. In terms of assembly, monomer. FMN serves as cofactor.

The protein localises to the cell membrane. It carries out the reaction (S)-dihydroorotate + a quinone = orotate + a quinol. It participates in pyrimidine metabolism; UMP biosynthesis via de novo pathway; orotate from (S)-dihydroorotate (quinone route): step 1/1. Functionally, catalyzes the conversion of dihydroorotate to orotate with quinone as electron acceptor. The chain is Dihydroorotate dehydrogenase (quinone) from Pseudomonas aeruginosa (strain LESB58).